Reading from the N-terminus, the 284-residue chain is Proteasome subunit pbs-5 (284 aa).

A propeptide spans 1-64 (removed in mature form); it reads MWGETFDDFE…AGKSMQFRKG (64 aa). The Nucleophile role is filled by threonine 65.

It belongs to the peptidase T1B family. As to quaternary structure, the 26S proteasome consists of a 20S proteasome core and two 19S regulatory subunits. The 20S proteasome core is composed of 28 subunits that are arranged in four stacked rings, resulting in a barrel-shaped structure. The two end rings are each formed by seven alpha subunits, and the two central rings are each formed by seven beta subunits. The catalytic chamber with the active sites is on the inside of the barrel.

It localises to the cytoplasm. Its subcellular location is the nucleus. The enzyme catalyses Cleavage of peptide bonds with very broad specificity.. Component of the 20S core proteasome complex involved in the proteolytic degradation of most intracellular proteins. This complex plays numerous essential roles within the cell by associating with different regulatory particles. Associated with two 19S regulatory particles, forms the 26S proteasome and thus participates in the ATP-dependent degradation of ubiquitinated proteins. The 26S proteasome plays a key role in the maintenance of protein homeostasis by removing misfolded or damaged proteins that could impair cellular functions, and by removing proteins whose functions are no longer required. In Caenorhabditis elegans, this protein is Proteasome subunit pbs-5.